The chain runs to 334 residues: Deoxyhypusine synthase (334 aa).

NAD(+) contacts are provided by residues 73–77 (SNIIS), 99–101 (TGG), glutamate 105, and aspartate 207. Residue 104 to 105 (EE) participates in spermidine binding. Spermidine contacts are provided by aspartate 212 and histidine 256. 276–277 (NA) lines the NAD(+) pocket. Spermidine is bound by residues 282 to 284 (GSD) and 291 to 297 (EAVSWGK). Catalysis depends on lysine 297, which acts as the Nucleophile. 310–311 (DA) lines the NAD(+) pocket.

It belongs to the deoxyhypusine synthase family. NAD(+) serves as cofactor.

It catalyses the reaction [eIF5A protein]-L-lysine + spermidine = [eIF5A protein]-deoxyhypusine + propane-1,3-diamine. It functions in the pathway protein modification; eIF5A hypusination. Functionally, catalyzes the NAD-dependent oxidative cleavage of spermidine and the subsequent transfer of the butylamine moiety of spermidine to the epsilon-amino group of a specific lysine residue of the eIF-5A precursor protein to form the intermediate deoxyhypusine residue. The polypeptide is Deoxyhypusine synthase (DYS1) (Encephalitozoon cuniculi (strain GB-M1) (Microsporidian parasite)).